Reading from the N-terminus, the 105-residue chain is UPF0145 protein OEOE_0637 (105 aa).

Belongs to the UPF0145 family.

The polypeptide is UPF0145 protein OEOE_0637 (Oenococcus oeni (strain ATCC BAA-331 / PSU-1)).